A 273-amino-acid chain; its full sequence is 3-methyl-2-oxobutanoate hydroxymethyltransferase (273 aa).

Residues Asp-49 and Asp-88 each coordinate Mg(2+). 3-methyl-2-oxobutanoate-binding positions include 49 to 50 (DS), Asp-88, and Lys-118. Glu-120 provides a ligand contact to Mg(2+). Glu-187 (proton acceptor) is an active-site residue.

This sequence belongs to the PanB family. Homodecamer; pentamer of dimers. Mg(2+) is required as a cofactor.

Its subcellular location is the cytoplasm. It catalyses the reaction 3-methyl-2-oxobutanoate + (6R)-5,10-methylene-5,6,7,8-tetrahydrofolate + H2O = 2-dehydropantoate + (6S)-5,6,7,8-tetrahydrofolate. It functions in the pathway cofactor biosynthesis; (R)-pantothenate biosynthesis; (R)-pantoate from 3-methyl-2-oxobutanoate: step 1/2. In terms of biological role, catalyzes the reversible reaction in which hydroxymethyl group from 5,10-methylenetetrahydrofolate is transferred onto alpha-ketoisovalerate to form ketopantoate. This chain is 3-methyl-2-oxobutanoate hydroxymethyltransferase, found in Sinorhizobium medicae (strain WSM419) (Ensifer medicae).